The primary structure comprises 34 residues: Somatostatin (34 aa).

Residues 1-20 (AVERPRQDGQVHEPPGRERK) form a disordered region. The cysteines at positions 23 and 34 are disulfide-linked.

The protein belongs to the somatostatin family.

The protein localises to the secreted. Functionally, somatostatin inhibits the release of somatotropin. The sequence is that of Somatostatin (sst) from Myxine glutinosa (Atlantic hagfish).